Consider the following 1465-residue polypeptide: Vacuolar heme ABC transmembrane exporter abc3 (1465 aa).

Residues 1 to 8 (MITANKGL) are Extracellular-facing. The helical transmembrane segment at 9–29 (SLVLLIPNLFALVSGGLQYVF) threads the bilayer. Residues 30–42 (DVRRRIFRPHFSQ) lie on the Cytoplasmic side of the membrane. A helical membrane pass occupies residues 43–63 (FWTIWMKFFSIALVIITQIYV). The Extracellular segment spans residues 64–69 (GYKTKN). Residues 70-90 (IGWNFFSVVTYCFVLFLQFAE) traverse the membrane as a helical segment. The Cytoplasmic segment spans residues 91–97 (QSTLRVP). A helical transmembrane segment spans residues 98–118 (MASLLIFWLLKVVTSLLILLF). Topologically, residues 119–129 (SPYIAITSMAR) are extracellular. Residues 130–150 (LLTLITLFCSLVCFISEVYVP) traverse the membrane as a helical segment. Residue 151 to 152 (PC) participates in heme binding. Topologically, residues 151-235 (PCNRVWYSDD…IYHSKNKRRS (85 aa)) are cytoplasmic. Residues 236-256 (LFLWKLLFFNHWKLVALITIT) form a helical membrane-spanning segment. One can recognise an ABC transmembrane type-1 1 domain in the interval 250-539 (VALITITKLI…LPTVISSLLE (290 aa)). Over 257–291 (KLIQDVLAFVQPTLIQKTILFISSYTSPNPESPSR) the chain is Extracellular. The chain crosses the membrane as a helical span at residues 292–312 (GFIIAILVLVANFLQTLLLQQ). The Cytoplasmic segment spans residues 313–362 (YNQLIMLLGMRWKTELLASIYRKSLLLSSSARQNRSIGDIINYMAVDTQK). Residues 363–383 (ISDLPIYLFIIVSGPFQIALA) form a helical membrane-spanning segment. The Extracellular portion of the chain corresponds to 384 to 394 (LSNLYHLMGYS). The chain crosses the membrane as a helical span at residues 395–415 (AFTGVAASVILFPCNIIVANV). Over 416–480 (YKKFQSILMK…KIGFITAIGD (65 aa)) the chain is Cytoplasmic. Residues 481–501 (FAWIFTTIIVTTVAFGAFIIF) form a helical membrane-spanning segment. Residues 502–511 (HGKTQALTAD) are Extracellular-facing. A helical membrane pass occupies residues 512–532 (IVFPAVSLFNLLQFPLAMLPT). Residues 533-899 (VISSLLEASV…VYWMYFKSCS (367 aa)) are Cytoplasmic-facing. The region spanning 575–804 (LEIKSGTFSW…TNSELKQQLS (230 aa)) is the ABC transporter 1 domain. Residue 614-621 (GKVGAGKS) coordinates ATP. Disordered stretches follow at residues 805–824 (EFNDEKDTQPLPEHTTSYPS) and 840–869 (TYSSSERKDSSNKYKSRKRNPIRQKVTEDD). A helical membrane pass occupies residues 900-920 (IGLILLYFFFIISGIMMNVAT). Residues 903 to 1189 (ILLYFFFIIS…IVQQSVDAEN (287 aa)) enclose the ABC transmembrane type-1 2 domain. The Extracellular segment spans residues 921-939 (NVWLKHWSEENGKSSSELN). A helical membrane pass occupies residues 940-960 (PSPYFYLGIYLFFGFLSCAFI). Residues 961 to 1033 (SSSSLTMTVL…FFFRNSIQVL (73 aa)) lie on the Cytoplasmic side of the membrane. A helical transmembrane segment spans residues 1034–1054 (FILGVICYSAPLSLLLIVPLF). At 1055–1465 (FLYLYNRAYY…YSLAKESGLI (411 aa)) the chain is on the extracellular side. The region spanning 1226–1460 (VSFNHYSAKY…KDSMFYSLAK (235 aa)) is the ABC transporter 2 domain. 1260–1267 (GRTGAGKS) contacts ATP.

This sequence belongs to the ABC transporter superfamily.

The protein resides in the vacuole membrane. In terms of biological role, iron-regulated vacuolar transporter that mobilizes stored heme from the vacuole to the cytosol in response to iron deficiency. The chain is Vacuolar heme ABC transmembrane exporter abc3 from Schizosaccharomyces pombe (strain 972 / ATCC 24843) (Fission yeast).